Here is a 338-residue protein sequence, read N- to C-terminus: Phosphatidylglycerol--prolipoprotein diacylglyceryl transferase (338 aa).

Helical transmembrane passes span Trp24–Val44, Leu67–Tyr87, Gly115–Trp135, and Phe141–Gly161. Arg162 contributes to the a 1,2-diacyl-sn-glycero-3-phospho-(1'-sn-glycerol) binding site. The next 3 helical transmembrane spans lie at Pro224–Leu244, Gly252–Phe272, and Gly304–Leu324.

This sequence belongs to the Lgt family.

It localises to the cell inner membrane. It carries out the reaction L-cysteinyl-[prolipoprotein] + a 1,2-diacyl-sn-glycero-3-phospho-(1'-sn-glycerol) = an S-1,2-diacyl-sn-glyceryl-L-cysteinyl-[prolipoprotein] + sn-glycerol 1-phosphate + H(+). The protein operates within protein modification; lipoprotein biosynthesis (diacylglyceryl transfer). Functionally, catalyzes the transfer of the diacylglyceryl group from phosphatidylglycerol to the sulfhydryl group of the N-terminal cysteine of a prolipoprotein, the first step in the formation of mature lipoproteins. This is Phosphatidylglycerol--prolipoprotein diacylglyceryl transferase from Treponema denticola (strain ATCC 35405 / DSM 14222 / CIP 103919 / JCM 8153 / KCTC 15104).